Consider the following 306-residue polypeptide: MLKFIFKRLLEALPTLFILITFSFFLMRLAPGSPFTSERAYPPEVMANIEAKYHLNEPLYKQYFLYLENLSKGDFGPSFKYKDQSVNDLIASAFPVSIKLGMVAFAFAVVLGVTAGTLAALNQNSRWDYILMSFSMLGVIMPSFVFAPVLVLIFAIYLGWLPAGGWNGGTAMYMILPVASLTIAYVAGIARIMRGSMIEVLHSNFIRTAKAKGLSMSRIILKHALRPALLPVITYLGPAFVGIITGSMVIESVFGLPGMGLLFVNGALNRDYSLVLSLTILVGTLTILFNAIVDILYAIIDPKIRY.

The Cytoplasmic segment spans residues 1 to 8 (MLKFIFKR). A helical membrane pass occupies residues 9–29 (LLEALPTLFILITFSFFLMRL). Over 30-99 (APGSPFTSER…IASAFPVSIK (70 aa)) the chain is Periplasmic. The region spanning 94-293 (FPVSIKLGMV…TLTILFNAIV (200 aa)) is the ABC transmembrane type-1 domain. The helical transmembrane segment at 100–120 (LGMVAFAFAVVLGVTAGTLAA) threads the bilayer. Residues 121 to 135 (LNQNSRWDYILMSFS) lie on the Cytoplasmic side of the membrane. A helical membrane pass occupies residues 136–156 (MLGVIMPSFVFAPVLVLIFAI). The Periplasmic segment spans residues 157 to 169 (YLGWLPAGGWNGG). A helical transmembrane segment spans residues 170–190 (TAMYMILPVASLTIAYVAGIA). The Cytoplasmic segment spans residues 191-229 (RIMRGSMIEVLHSNFIRTAKAKGLSMSRIILKHALRPAL). Residues 230–250 (LPVITYLGPAFVGIITGSMVI) traverse the membrane as a helical segment. Residues 251-279 (ESVFGLPGMGLLFVNGALNRDYSLVLSLT) are Periplasmic-facing. The helical transmembrane segment at 280–300 (ILVGTLTILFNAIVDILYAII) threads the bilayer. Residues 301–306 (DPKIRY) are Cytoplasmic-facing.

This sequence belongs to the binding-protein-dependent transport system permease family. OppBC subfamily. As to quaternary structure, the complex is composed of two ATP-binding proteins (OppD and OppF), two transmembrane proteins (OppB and OppC) and a solute-binding protein (OppA).

Its subcellular location is the cell inner membrane. Part of the ABC transporter complex OppABCDF involved in the uptake of oligopeptides. Probably responsible for the translocation of the substrate across the membrane. The chain is Oligopeptide transport system permease protein OppB (oppB) from Haemophilus influenzae (strain ATCC 51907 / DSM 11121 / KW20 / Rd).